A 319-amino-acid chain; its full sequence is Succinoglycan biosynthesis protein ExoW (319 aa).

Belongs to the glycosyltransferase 2 family.

It is found in the cell membrane. Its pathway is glycan metabolism; exopolysaccharide biosynthesis. Its function is as follows. Glycosyltransferase required for the synthesis of succinoglycan (EPS I). Needed for the addition of the seventh sugar (glucose), catalyzes the formation of a beta-1,3 linkage between the seventh and eighth sugar. The protein is Succinoglycan biosynthesis protein ExoW (exoW) of Rhizobium meliloti (strain 1021) (Ensifer meliloti).